A 250-amino-acid chain; its full sequence is Small ribosomal subunit protein uS2 (250 aa).

It belongs to the universal ribosomal protein uS2 family.

The protein is Small ribosomal subunit protein uS2 of Polaromonas naphthalenivorans (strain CJ2).